The chain runs to 199 residues: NADH-quinone oxidoreductase subunit C (199 aa).

It belongs to the complex I 30 kDa subunit family. NDH-1 is composed of 14 different subunits. Subunits NuoB, C, D, E, F, and G constitute the peripheral sector of the complex.

It is found in the cell inner membrane. It catalyses the reaction a quinone + NADH + 5 H(+)(in) = a quinol + NAD(+) + 4 H(+)(out). In terms of biological role, NDH-1 shuttles electrons from NADH, via FMN and iron-sulfur (Fe-S) centers, to quinones in the respiratory chain. The immediate electron acceptor for the enzyme in this species is believed to be ubiquinone. Couples the redox reaction to proton translocation (for every two electrons transferred, four hydrogen ions are translocated across the cytoplasmic membrane), and thus conserves the redox energy in a proton gradient. This is NADH-quinone oxidoreductase subunit C from Rhodopseudomonas palustris (strain BisB18).